The sequence spans 309 residues: Probable RuBisCO transcriptional regulator (309 aa).

An HTH lysR-type domain is found at 6–63; sequence FTLDQLRILKAIVKEGSFKRAADSLYVSQPAISLQIQNLEKQLNIPLFERSNKKATLT. Positions 23–42 form a DNA-binding region, H-T-H motif; it reads FKRAADSLYVSQPAISLQIQ.

The protein belongs to the LysR transcriptional regulatory family.

The protein resides in the plastid. Its subcellular location is the chloroplast. In terms of biological role, trans-acting transcriptional regulator of RuBisCO genes (rbcL and rbcS) expression. The sequence is that of Probable RuBisCO transcriptional regulator (rbcR) from Gracilaria tenuistipitata var. liui (Red alga).